A 95-amino-acid polypeptide reads, in one-letter code: Aspartyl/glutamyl-tRNA(Asn/Gln) amidotransferase subunit C (95 aa).

The protein belongs to the GatC family. Heterotrimer of A, B and C subunits.

The catalysed reaction is L-glutamyl-tRNA(Gln) + L-glutamine + ATP + H2O = L-glutaminyl-tRNA(Gln) + L-glutamate + ADP + phosphate + H(+). The enzyme catalyses L-aspartyl-tRNA(Asn) + L-glutamine + ATP + H2O = L-asparaginyl-tRNA(Asn) + L-glutamate + ADP + phosphate + 2 H(+). Functionally, allows the formation of correctly charged Asn-tRNA(Asn) or Gln-tRNA(Gln) through the transamidation of misacylated Asp-tRNA(Asn) or Glu-tRNA(Gln) in organisms which lack either or both of asparaginyl-tRNA or glutaminyl-tRNA synthetases. The reaction takes place in the presence of glutamine and ATP through an activated phospho-Asp-tRNA(Asn) or phospho-Glu-tRNA(Gln). The protein is Aspartyl/glutamyl-tRNA(Asn/Gln) amidotransferase subunit C of Xanthobacter autotrophicus (strain ATCC BAA-1158 / Py2).